Consider the following 285-residue polypeptide: Bifunctional protein FolD (285 aa).

NADP(+) contacts are provided by residues 166 to 168 (GAS) and I232.

The protein belongs to the tetrahydrofolate dehydrogenase/cyclohydrolase family. Homodimer.

The catalysed reaction is (6R)-5,10-methylene-5,6,7,8-tetrahydrofolate + NADP(+) = (6R)-5,10-methenyltetrahydrofolate + NADPH. It carries out the reaction (6R)-5,10-methenyltetrahydrofolate + H2O = (6R)-10-formyltetrahydrofolate + H(+). It participates in one-carbon metabolism; tetrahydrofolate interconversion. Functionally, catalyzes the oxidation of 5,10-methylenetetrahydrofolate to 5,10-methenyltetrahydrofolate and then the hydrolysis of 5,10-methenyltetrahydrofolate to 10-formyltetrahydrofolate. This is Bifunctional protein FolD from Psychromonas ingrahamii (strain DSM 17664 / CCUG 51855 / 37).